Consider the following 298-residue polypeptide: ATP phosphoribosyltransferase (298 aa).

Belongs to the ATP phosphoribosyltransferase family. Long subfamily. It depends on Mg(2+) as a cofactor.

The protein localises to the cytoplasm. The enzyme catalyses 1-(5-phospho-beta-D-ribosyl)-ATP + diphosphate = 5-phospho-alpha-D-ribose 1-diphosphate + ATP. The protein operates within amino-acid biosynthesis; L-histidine biosynthesis; L-histidine from 5-phospho-alpha-D-ribose 1-diphosphate: step 1/9. Its activity is regulated as follows. Feedback inhibited by histidine. Functionally, catalyzes the condensation of ATP and 5-phosphoribose 1-diphosphate to form N'-(5'-phosphoribosyl)-ATP (PR-ATP). Has a crucial role in the pathway because the rate of histidine biosynthesis seems to be controlled primarily by regulation of HisG enzymatic activity. The polypeptide is ATP phosphoribosyltransferase (Aliivibrio fischeri (strain MJ11) (Vibrio fischeri)).